A 272-amino-acid polypeptide reads, in one-letter code: Indole-3-glycerol phosphate synthase (272 aa).

It belongs to the TrpC family.

It carries out the reaction 1-(2-carboxyphenylamino)-1-deoxy-D-ribulose 5-phosphate + H(+) = (1S,2R)-1-C-(indol-3-yl)glycerol 3-phosphate + CO2 + H2O. Its pathway is amino-acid biosynthesis; L-tryptophan biosynthesis; L-tryptophan from chorismate: step 4/5. This is Indole-3-glycerol phosphate synthase from Mycolicibacterium paratuberculosis (strain ATCC BAA-968 / K-10) (Mycobacterium paratuberculosis).